The chain runs to 105 residues: Death-associated protein 1 homolog (105 aa).

The tract at residues 75 to 105 is disordered; sequence AAQVAHQKPVPSAQKLPAGQHLNQHIHQPRK. Residues 95–105 show a composition bias toward polar residues; it reads HLNQHIHQPRK.

Belongs to the DAP-DAPL1 family. Associates with ribosomes; inhibiting translation. Interacts with eiF5a (eif5a and eif5a2); inhibiting translation.

Ribosome-binding protein involved in ribosome hibernation, a process during which ribosomes are stabilized in an inactive state and preserved from proteasomal degradation. Acts via its association with eiF5a (eif5a and eif5a2) at the polypeptide exit tunnel of the ribosome, preventing mRNA translation. Involved in ribosome hibernation in the mature egg by preventing mRNA translation, leading to ribosome inactivation. Ribosomes, which are produced in large quantities during oogenesis, are stored and translationally repressed in the egg and early embryo. Compared to dap1b, binds and inactivates ribosomes less efficiently. The protein is Death-associated protein 1 homolog of Danio rerio (Zebrafish).